We begin with the raw amino-acid sequence, 121 residues long: Small ribosomal subunit protein uS13 (121 aa).

The disordered stretch occupies residues 94–121; that stretch reads GLPVRGQNTKNNSRTRKGPRRTVANKKK. Over residues 106–121 the composition is skewed to basic residues; sequence SRTRKGPRRTVANKKK.

The protein belongs to the universal ribosomal protein uS13 family. Part of the 30S ribosomal subunit. Forms a loose heterodimer with protein S19. Forms two bridges to the 50S subunit in the 70S ribosome.

Functionally, located at the top of the head of the 30S subunit, it contacts several helices of the 16S rRNA. In the 70S ribosome it contacts the 23S rRNA (bridge B1a) and protein L5 of the 50S subunit (bridge B1b), connecting the 2 subunits; these bridges are implicated in subunit movement. Contacts the tRNAs in the A and P-sites. The polypeptide is Small ribosomal subunit protein uS13 (Halalkalibacterium halodurans (strain ATCC BAA-125 / DSM 18197 / FERM 7344 / JCM 9153 / C-125) (Bacillus halodurans)).